Here is a 63-residue protein sequence, read N- to C-terminus: Cecropin-A1 (63 aa).

A signal peptide spans 1 to 23 (MNFYNIFVFVALILAITIGQSEA). R62 bears the Arginine amide mark.

The protein belongs to the cecropin family.

The protein resides in the secreted. Cecropins have lytic and antibacterial activity against several Gram-positive and Gram-negative bacteria. This Drosophila sechellia (Fruit fly) protein is Cecropin-A1 (CecA1).